We begin with the raw amino-acid sequence, 194 residues long: Oligoribonuclease (194 aa).

One can recognise an Exonuclease domain in the interval 11-174 (LIWIDLEMTG…SDVRDSIDEL (164 aa)). Y132 is an active-site residue.

The protein belongs to the oligoribonuclease family.

The protein resides in the cytoplasm. In terms of biological role, 3'-to-5' exoribonuclease specific for small oligoribonucleotides. The chain is Oligoribonuclease from Xanthomonas axonopodis pv. citri (strain 306).